Here is a 123-residue protein sequence, read N- to C-terminus: Sterol carrier protein 2 (123 aa).

The region spanning 16–113 is the SCP2 domain; sequence KEHLSTDAGK…GSLSAAQKFT (98 aa). Residues 121-123 carry the Microbody targeting signal motif; sequence SKL.

Expressed in most tissues including seedlings, cotyledons, inflorescence, leaves, stems, roots, siliques and flower buds, with the highest levels in floral tissues and in maturing seeds.

It localises to the peroxisome. Functionally, enhances the transfer of lipids between membranes in vitro. Active on phosphatidylcholine (PC), 1-palmitoyl 2-oleoyl phosphatidylcholine (POPC) and ergosterol, and, to a lower extent, dimyristoyl phosphatidic acid, stigmasterol, desmosterol, beta-sitosterol and steryl glucoside. Inactive or poorly active on palmitic acid, stearoyl-coenzyme A, cholesterol, glucosylceramide and ceramide. Required during seeds and seedlings development. This chain is Sterol carrier protein 2, found in Arabidopsis thaliana (Mouse-ear cress).